Consider the following 380-residue polypeptide: 1-deoxy-D-xylulose 5-phosphate reductoisomerase (380 aa).

8 residues coordinate NADPH: T10, G11, S12, I13, G36, R37, N38, and N120. Position 121 (K121) interacts with 1-deoxy-D-xylulose 5-phosphate. E122 is a binding site for NADPH. D146 contacts Mn(2+). 1-deoxy-D-xylulose 5-phosphate is bound by residues S147, E148, S172, and H195. E148 serves as a coordination point for Mn(2+). Residue G201 participates in NADPH binding. The 1-deoxy-D-xylulose 5-phosphate site is built by S208, N213, K214, and E217. E217 serves as a coordination point for Mn(2+).

The protein belongs to the DXR family. Requires Mg(2+) as cofactor. Mn(2+) serves as cofactor.

The catalysed reaction is 2-C-methyl-D-erythritol 4-phosphate + NADP(+) = 1-deoxy-D-xylulose 5-phosphate + NADPH + H(+). Its pathway is isoprenoid biosynthesis; isopentenyl diphosphate biosynthesis via DXP pathway; isopentenyl diphosphate from 1-deoxy-D-xylulose 5-phosphate: step 1/6. Its function is as follows. Catalyzes the NADPH-dependent rearrangement and reduction of 1-deoxy-D-xylulose-5-phosphate (DXP) to 2-C-methyl-D-erythritol 4-phosphate (MEP). The protein is 1-deoxy-D-xylulose 5-phosphate reductoisomerase of Listeria monocytogenes serotype 4a (strain HCC23).